The chain runs to 398 residues: Na(+)/H(+) antiporter NhaA (398 aa).

12 helical membrane-spanning segments follow: residues Met-9–Val-29, Leu-57–Leu-77, Ala-95–Met-115, Ala-124–Leu-144, Val-154–Phe-174, Thr-177–Met-197, Phe-204–Ile-224, Ala-226–Val-246, Trp-255–Ile-275, Phe-288–Phe-308, Ile-329–Leu-349, and Ile-359–Leu-379.

The protein belongs to the NhaA Na(+)/H(+) (TC 2.A.33) antiporter family.

It localises to the cell inner membrane. It catalyses the reaction Na(+)(in) + 2 H(+)(out) = Na(+)(out) + 2 H(+)(in). Na(+)/H(+) antiporter that extrudes sodium in exchange for external protons. In Sodalis glossinidius (strain morsitans), this protein is Na(+)/H(+) antiporter NhaA.